The following is a 463-amino-acid chain: Asparagine--tRNA ligase (463 aa).

The protein belongs to the class-II aminoacyl-tRNA synthetase family. In terms of assembly, homodimer.

The protein localises to the cytoplasm. It carries out the reaction tRNA(Asn) + L-asparagine + ATP = L-asparaginyl-tRNA(Asn) + AMP + diphosphate + H(+). This Clostridium novyi (strain NT) protein is Asparagine--tRNA ligase.